The following is a 148-amino-acid chain: Probable 4-amino-4-deoxy-L-arabinose-phosphoundecaprenol flippase subunit ArnF (148 aa).

The Cytoplasmic portion of the chain corresponds to M1–Y23. A helical transmembrane segment spans residues L24–V44. Over M45–P63 the chain is Periplasmic. The chain crosses the membrane as a helical span at residues L64–A84. The Cytoplasmic segment spans residues L85 to N91. A helical membrane pass occupies residues I92–P112. The Periplasmic segment spans residues S113–P117. A helical membrane pass occupies residues L118 to I138. The Cytoplasmic segment spans residues K139–H148.

It belongs to the ArnF family. In terms of assembly, heterodimer of ArnE and ArnF.

Its subcellular location is the cell inner membrane. It participates in bacterial outer membrane biogenesis; lipopolysaccharide biosynthesis. Translocates 4-amino-4-deoxy-L-arabinose-phosphoundecaprenol (alpha-L-Ara4N-phosphoundecaprenol) from the cytoplasmic to the periplasmic side of the inner membrane. This Aeromonas salmonicida (strain A449) protein is Probable 4-amino-4-deoxy-L-arabinose-phosphoundecaprenol flippase subunit ArnF.